The chain runs to 343 residues: Putative adenosine/adenine deaminase (343 aa).

Positions 16, 18, and 204 each coordinate Zn(2+). Residue His-18 coordinates substrate. The active-site Proton donor is the Glu-207. Asp-285 contributes to the Zn(2+) binding site. Asp-286 contacts substrate.

The protein belongs to the metallo-dependent hydrolases superfamily. Adenosine and AMP deaminases family. The cofactor is Zn(2+).

Putative nucleoside deaminase. May catalyze the hydrolytic deamination of adenosine or some similar substrate and play a role in purine metabolism. In Streptomyces coelicolor (strain ATCC BAA-471 / A3(2) / M145), this protein is Putative adenosine/adenine deaminase.